A 497-amino-acid chain; its full sequence is MTQASSTSPEPSRRQPDSGIVLYDTMQRQKVPFVPSVPGRVGMYLCGPTVYSDAHLGHAKKEVAFDVIRRTLLHFGYQVRYVTNVTDVGHLQDDSDDGEDKIARRAALERLEPMEVADKYFWSFVEDMEALNVLKPSINPRATGHIPEQIALIEELIERGHAYVSDGSVYFDVRSWPEYGKLSGRRLDELEEGTREAVREEKRDPRDFALWKRAEPGHLMRWASPWGEGFPGWHIECSAMSLKYLGEGFDIHGGGLDLEFPHHEAEIAQAEAAGHPFARYWLHNNMVTVGGEKMSKSKGNFTTLKALFAQHDPMVIRFLLVSSHYRSITEFSDAAFESARSGYRRLTEALHEIERRLPAAPDQDDPALLEKIAGHIRTFEDAMRDDFNTPRAVAALFGLTTDVNAALNAGEVGRQALTAARDAYRTLGGGVLGLFAEGRTEREDDSQIVNALMELVLQARQHYRLQKQYAQADELRNTLAAVGVTVEDTREGPRWRR.

Cys46 serves as a coordination point for Zn(2+). A 'HIGH' region motif is present at residues 48-58; the sequence is PTVYSDAHLGH. Cys237, His262, and Glu266 together coordinate Zn(2+). A 'KMSKS' region motif is present at residues 293-297; that stretch reads KMSKS. An ATP-binding site is contributed by Lys296.

This sequence belongs to the class-I aminoacyl-tRNA synthetase family. Monomer. It depends on Zn(2+) as a cofactor.

The protein localises to the cytoplasm. It catalyses the reaction tRNA(Cys) + L-cysteine + ATP = L-cysteinyl-tRNA(Cys) + AMP + diphosphate. This chain is Cysteine--tRNA ligase, found in Deinococcus geothermalis (strain DSM 11300 / CIP 105573 / AG-3a).